A 152-amino-acid polypeptide reads, in one-letter code: Small ribosomal subunit protein uS13 (152 aa).

It belongs to the universal ribosomal protein uS13 family.

It is found in the cytoplasm. Functionally, located at the top of the head of the 40S subunit, it contacts several helices of the 18S rRNA. In Branchiostoma belcheri (Amphioxus), this protein is Small ribosomal subunit protein uS13 (RPS18).